We begin with the raw amino-acid sequence, 261 residues long: Adenosylcobinamide-GDP ribazoletransferase (261 aa).

Helical transmembrane passes span Asn12 to Ile32, Leu46 to Leu66, Pro67 to His87, Gly120 to Leu140, and Ile199 to Leu219.

This sequence belongs to the CobS family. Mg(2+) is required as a cofactor.

It localises to the cell inner membrane. It carries out the reaction alpha-ribazole + adenosylcob(III)inamide-GDP = adenosylcob(III)alamin + GMP + H(+). The catalysed reaction is alpha-ribazole 5'-phosphate + adenosylcob(III)inamide-GDP = adenosylcob(III)alamin 5'-phosphate + GMP + H(+). Its pathway is cofactor biosynthesis; adenosylcobalamin biosynthesis; adenosylcobalamin from cob(II)yrinate a,c-diamide: step 7/7. Joins adenosylcobinamide-GDP and alpha-ribazole to generate adenosylcobalamin (Ado-cobalamin). Also synthesizes adenosylcobalamin 5'-phosphate from adenosylcobinamide-GDP and alpha-ribazole 5'-phosphate. This is Adenosylcobinamide-GDP ribazoletransferase from Shewanella frigidimarina (strain NCIMB 400).